A 502-amino-acid chain; its full sequence is ATP synthase subunit alpha 1/3 (502 aa).

169 to 176 is an ATP binding site; sequence GDRQTGKT.

It belongs to the ATPase alpha/beta chains family. F-type ATPases have 2 components, CF(1) - the catalytic core - and CF(0) - the membrane proton channel. CF(1) has five subunits: alpha(3), beta(3), gamma(1), delta(1), epsilon(1). CF(0) has three main subunits: a(1), b(2) and c(9-12). The alpha and beta chains form an alternating ring which encloses part of the gamma chain. CF(1) is attached to CF(0) by a central stalk formed by the gamma and epsilon chains, while a peripheral stalk is formed by the delta and b chains.

Its subcellular location is the cell inner membrane. The catalysed reaction is ATP + H2O + 4 H(+)(in) = ADP + phosphate + 5 H(+)(out). Produces ATP from ADP in the presence of a proton gradient across the membrane. The alpha chain is a regulatory subunit. This Syntrophotalea carbinolica (strain DSM 2380 / NBRC 103641 / GraBd1) (Pelobacter carbinolicus) protein is ATP synthase subunit alpha 1/3.